The chain runs to 217 residues: ATP phosphoribosyltransferase (217 aa).

The protein belongs to the ATP phosphoribosyltransferase family. Short subfamily. Heteromultimer composed of HisG and HisZ subunits.

It localises to the cytoplasm. The catalysed reaction is 1-(5-phospho-beta-D-ribosyl)-ATP + diphosphate = 5-phospho-alpha-D-ribose 1-diphosphate + ATP. It participates in amino-acid biosynthesis; L-histidine biosynthesis; L-histidine from 5-phospho-alpha-D-ribose 1-diphosphate: step 1/9. Catalyzes the condensation of ATP and 5-phosphoribose 1-diphosphate to form N'-(5'-phosphoribosyl)-ATP (PR-ATP). Has a crucial role in the pathway because the rate of histidine biosynthesis seems to be controlled primarily by regulation of HisG enzymatic activity. The polypeptide is ATP phosphoribosyltransferase (Burkholderia vietnamiensis (strain G4 / LMG 22486) (Burkholderia cepacia (strain R1808))).